The sequence spans 296 residues: Pantothenate synthetase (296 aa).

Met-31–His-38 lines the ATP pocket. Catalysis depends on His-38, which acts as the Proton donor. Gln-62 is a (R)-pantoate binding site. Gln-62 is a beta-alanine binding site. Gly-148 to Asp-151 contributes to the ATP binding site. Gln-154 provides a ligand contact to (R)-pantoate. ATP contacts are provided by residues Val-177 and Leu-185–Arg-188.

This sequence belongs to the pantothenate synthetase family. In terms of assembly, homodimer.

The protein resides in the cytoplasm. It catalyses the reaction (R)-pantoate + beta-alanine + ATP = (R)-pantothenate + AMP + diphosphate + H(+). The protein operates within cofactor biosynthesis; (R)-pantothenate biosynthesis; (R)-pantothenate from (R)-pantoate and beta-alanine: step 1/1. Catalyzes the condensation of pantoate with beta-alanine in an ATP-dependent reaction via a pantoyl-adenylate intermediate. The chain is Pantothenate synthetase from Deinococcus geothermalis (strain DSM 11300 / CIP 105573 / AG-3a).